A 600-amino-acid chain; its full sequence is Elongation factor 4 (600 aa).

Residues 7–189 (SLIRNFSIIA…ALVQRLPAPT (183 aa)) form the tr-type G domain. GTP is bound by residues 19–24 (DHGKST) and 136–139 (NKID).

This sequence belongs to the TRAFAC class translation factor GTPase superfamily. Classic translation factor GTPase family. LepA subfamily.

It is found in the cell inner membrane. It catalyses the reaction GTP + H2O = GDP + phosphate + H(+). Required for accurate and efficient protein synthesis under certain stress conditions. May act as a fidelity factor of the translation reaction, by catalyzing a one-codon backward translocation of tRNAs on improperly translocated ribosomes. Back-translocation proceeds from a post-translocation (POST) complex to a pre-translocation (PRE) complex, thus giving elongation factor G a second chance to translocate the tRNAs correctly. Binds to ribosomes in a GTP-dependent manner. In Gluconobacter oxydans (strain 621H) (Gluconobacter suboxydans), this protein is Elongation factor 4.